Here is a 236-residue protein sequence, read N- to C-terminus: tRNA1(Val) (adenine(37)-N6)-methyltransferase (236 aa).

This sequence belongs to the methyltransferase superfamily. tRNA (adenine-N(6)-)-methyltransferase family.

The protein resides in the cytoplasm. It carries out the reaction adenosine(37) in tRNA1(Val) + S-adenosyl-L-methionine = N(6)-methyladenosine(37) in tRNA1(Val) + S-adenosyl-L-homocysteine + H(+). Its function is as follows. Specifically methylates the adenine in position 37 of tRNA(1)(Val) (anticodon cmo5UAC). The protein is tRNA1(Val) (adenine(37)-N6)-methyltransferase of Shewanella sp. (strain MR-7).